The following is a 255-amino-acid chain: Diphthine synthase (255 aa).

Residues Leu9, Asp85, Val88, 113–114 (SI), Leu164, Ala207, and His232 each bind S-adenosyl-L-methionine.

This sequence belongs to the diphthine synthase family. As to quaternary structure, homodimer.

The enzyme catalyses 2-[(3S)-amino-3-carboxypropyl]-L-histidyl-[translation elongation factor 2] + 3 S-adenosyl-L-methionine = diphthine-[translation elongation factor 2] + 3 S-adenosyl-L-homocysteine + 3 H(+). It participates in protein modification; peptidyl-diphthamide biosynthesis. In terms of biological role, S-adenosyl-L-methionine-dependent methyltransferase that catalyzes the trimethylation of the amino group of the modified target histidine residue in translation elongation factor 2 (EF-2), to form an intermediate called diphthine. The three successive methylation reactions represent the second step of diphthamide biosynthesis. The protein is Diphthine synthase of Methanococcus maripaludis (strain C6 / ATCC BAA-1332).